The following is a 141-amino-acid chain: Ribonuclease P protein component (141 aa).

Disordered regions lie at residues 37-56 (RTEEESNAAKTGDNPRVGFT) and 114-141 (RRITAKGERRSGGKRRTERPEPGPVNGK). A compositionally biased stretch (basic and acidic residues) spans 114 to 124 (RRITAKGERRS).

This sequence belongs to the RnpA family. In terms of assembly, consists of a catalytic RNA component (M1 or rnpB) and a protein subunit.

It catalyses the reaction Endonucleolytic cleavage of RNA, removing 5'-extranucleotides from tRNA precursor.. RNaseP catalyzes the removal of the 5'-leader sequence from pre-tRNA to produce the mature 5'-terminus. It can also cleave other RNA substrates such as 4.5S RNA. The protein component plays an auxiliary but essential role in vivo by binding to the 5'-leader sequence and broadening the substrate specificity of the ribozyme. This chain is Ribonuclease P protein component, found in Brucella melitensis biotype 2 (strain ATCC 23457).